The primary structure comprises 340 residues: Glycerol-3-phosphate dehydrogenase [NAD(P)+] (340 aa).

NADPH contacts are provided by S11, W12, R33, and K106. K106, G137, and S139 together coordinate sn-glycerol 3-phosphate. A141 is an NADPH binding site. Positions 192, 245, 255, 256, and 257 each coordinate sn-glycerol 3-phosphate. K192 functions as the Proton acceptor in the catalytic mechanism. R256 serves as a coordination point for NADPH. The NADPH site is built by V280 and E282.

Belongs to the NAD-dependent glycerol-3-phosphate dehydrogenase family.

The protein resides in the cytoplasm. It carries out the reaction sn-glycerol 3-phosphate + NAD(+) = dihydroxyacetone phosphate + NADH + H(+). The enzyme catalyses sn-glycerol 3-phosphate + NADP(+) = dihydroxyacetone phosphate + NADPH + H(+). It functions in the pathway membrane lipid metabolism; glycerophospholipid metabolism. Its function is as follows. Catalyzes the reduction of the glycolytic intermediate dihydroxyacetone phosphate (DHAP) to sn-glycerol 3-phosphate (G3P), the key precursor for phospholipid synthesis. The polypeptide is Glycerol-3-phosphate dehydrogenase [NAD(P)+] (Bacillus cereus (strain 03BB102)).